Here is a 706-residue protein sequence, read N- to C-terminus: Termination factor NPH-I homolog (706 aa).

The Helicase ATP-binding domain maps to Ile62 to Arg227. His75 to Thr82 is a binding site for ATP. A DEAH box motif is present at residues Asp168–His171. In terms of domain architecture, Helicase C-terminal spans Gln417–Leu599.

The protein belongs to the DEAD box helicase family. DEAH subfamily. Part of the viral DNA-directed RNA polymerase that consists of 8 polII-like subunits (RPB1, RPB2, RPB3, RPB5, RPB6, RPB7, RPB9, RPB10), a capping enzyme and a termination factor.

The protein localises to the virion. Putative DNA-dependent ATPase required for providing the needed energy to achieve the termination of early transcripts. In African swine fever virus (isolate Tick/South Africa/Pretoriuskop Pr4/1996) (ASFV), this protein is Termination factor NPH-I homolog.